The chain runs to 63 residues: Jingdongin-1-MT1 (63 aa).

Residues 1-22 form the signal peptide; the sequence is MFTLKKSLLLLFFLGTINLSLC. A propeptide spans 23–44 (removed in mature form); the sequence is EQERDADEEERRDDDEMDVEVE. Cysteine 57 and cysteine 63 are oxidised to a cystine.

It belongs to the frog skin active peptide (FSAP) family. Brevinin subfamily. Expressed by the skin glands.

It localises to the secreted. Antimicrobial peptide. Active against some Gram-negative and a variety of Gram-positive bacterial strains. Active against fungus C.glabrata 090902 but not against C.neoformans 201211. Shows hemolytic activity against human erythrocytes. This Amolops mantzorum (Sichuan torrent frog) protein is Jingdongin-1-MT1.